A 264-amino-acid chain; its full sequence is Interleukin-33 (264 aa).

A homeodomain-like HTH domain region spans residues 1–67 (MRPRMKYSNS…ETCYFGKEPA (67 aa)). Residues 1-101 (MRPRMKYSNS…RSLLGSIQAF (101 aa)) constitute a propeptide that is removed on maturation. An interaction with RELA region spans residues 66–108 (PAKRYSLKSGSKHEGRLSTCLPDSRKRSLLGSIQAFAASVDTL).

Belongs to the IL-1 family. Highly divergent. As to quaternary structure, forms a 1:1:1 heterotrimeric complex with its primary high-affinity receptor IL1RL1 and the coreceptor IL1RAP. Interacts with cargo receptor TMED10; the interaction mediates the translocation from the cytoplasm into the ERGIC (endoplasmic reticulum-Golgi intermediate compartment) and thereby secretion. Post-translationally, the full-length protein can be released from cells and is able to signal via the IL1RL1/ST2 receptor. However, proteolytic processing by CELA1, CSTG/cathepsin G and ELANE/neutrophil elastase produces C-terminal peptides that are more active than the unprocessed full-length protein. May also be proteolytically processed by calpains. Proteolytic cleavage mediated by apoptotic caspases including CASP3 and CASP7 results in IL33 inactivation. In vitro proteolytic cleavage by CASP1 was reported but could not be confirmed in vivo suggesting that IL33 is probably not a direct substrate for that caspase.

Its subcellular location is the nucleus. It is found in the chromosome. It localises to the cytoplasm. The protein localises to the cytoplasmic vesicle. The protein resides in the secretory vesicle. Its subcellular location is the secreted. Functionally, cytokine that binds to and signals through the IL1RL1/ST2 receptor which in turn activates NF-kappa-B and MAPK signaling pathways in target cells. Involved in the maturation of Th2 cells inducing the secretion of T-helper type 2-associated cytokines. Also involved in activation of mast cells, basophils, eosinophils and natural killer cells. Acts as a chemoattractant for Th2 cells, and may function as an 'alarmin', that amplifies immune responses during tissue injury. Induces rapid UCP2-dependent mitochondrial rewiring that attenuates the generation of reactive oxygen species and preserves the integrity of Krebs cycle required for persistent production of itaconate and subsequent GATA3-dependent differentiation of inflammation-resolving alternatively activated macrophages. Its function is as follows. In quiescent endothelia the uncleaved form is constitutively and abundantly expressed, and acts as a chromatin-associated nuclear factor with transcriptional repressor properties, it may sequester nuclear NF-kappaB/RELA, lowering expression of its targets. This form is rapidely lost upon angiogenic or pro-inflammatory activation. This is Interleukin-33 from Rattus norvegicus (Rat).